Reading from the N-terminus, the 314-residue chain is MSRPRRRGRDINGVLLLDKPQGMSSNDALQKVKRIYNANRAGHTGALDPLATGMLPICFGEATKFSQYLLDSDKRYRVIARLGQRTDTSDADGQIVEERPVTFSAEQLAAALDTFRGDIEQIPSMYSALKYQGKKLYEYARQGIEVPREARPITIYELLFIRHEGNELELEIHCSKGTYIRTIIDDLGEKLGCGAHVIYLRRLAVSKYPVERMVTLEHLRELVEQAEQQDIPAAELLDPLLMPMDSPASDYPVVNLPLTSSVYFKNGNPVRTSGAPLEGLVRVTEGENGKFIGMGEIDDEGRVAPRRLVVEYPA.

A substrate-binding site is contributed by His43. Asp48 serves as the catalytic Nucleophile. Residues Tyr76, Tyr179, and Leu200 each contribute to the substrate site.

The protein belongs to the pseudouridine synthase TruB family. Type 1 subfamily.

It catalyses the reaction uridine(55) in tRNA = pseudouridine(55) in tRNA. Functionally, responsible for synthesis of pseudouridine from uracil-55 in the psi GC loop of transfer RNAs. The protein is tRNA pseudouridine synthase B of Shigella boydii serotype 4 (strain Sb227).